The sequence spans 899 residues: RNA-binding motif protein 25 (899 aa).

Positions 1 to 20 (MADESSSPATGDPNSQKPES) are enriched in polar residues. The disordered stretch occupies residues 1–112 (MADESSSPAT…SMPQYQPQPG (112 aa)). Positions 26–63 (IPNPNPNPSLTPPPPQQHSQPPVAPLVPPGPPYAPPAQ) are enriched in pro residues. The RRM domain occupies 204 to 281 (TTIYIGKIAT…QELLVNVNQA (78 aa)). Disordered regions lie at residues 298 to 572 (KKAK…EQNL) and 611 to 778 (GESA…KESG). Composition is skewed to basic and acidic residues over residues 317 to 340 (EQDK…KENI) and 354 to 372 (EADR…ERLK). Over residues 375–384 (PLPPPPPPPA) the composition is skewed to pro residues. Basic and acidic residues predominate over residues 430–505 (WSKRNDRRSR…QYEKEKEKEK (76 aa)). A coiled-coil region spans residues 434–578 (NDRRSRERGE…EQNLQQQQLD (145 aa)). Residues 515–524 (YEEEEEEDDD) are compositionally biased toward acidic residues. Positions 526–533 (SRRRWHRA) match the Nuclear localization signal 1 motif. Over residues 533 to 568 (AALDERRRRQLREKEDDLADRLKEEEEVAEAKRSAE) the composition is skewed to basic and acidic residues. The span at 626–640 (GSGNESMAIDNNSGS) shows a compositional bias: polar residues. Composition is skewed to basic and acidic residues over residues 723–733 (PKEETIETEKQ) and 740–778 (DKAS…KESG). Residues 735–742 (SRRSHDKA) carry the Nuclear localization signal 2 motif. A PWI domain is found at 802–899 (EDLFSYEINW…EAGVPVKSKA (98 aa)).

As to quaternary structure, specifically associates with functional splicing complexes. Associates with exon junction complex (EJC) proteins. In terms of processing, phosphorylated; the phosphorylation level is repressed by abscisic acid (ABA).

The protein localises to the nucleus. RNA-binding protein that acts as a regulator of alternative pre-mRNA splicing. Negative regulator of responses to abscisic acid (ABA), including in early development. The polypeptide is RNA-binding motif protein 25 (Arabidopsis thaliana (Mouse-ear cress)).